The following is a 364-amino-acid chain: Peptide chain release factor 1 (364 aa).

The residue at position 237 (Gln-237) is an N5-methylglutamine.

Belongs to the prokaryotic/mitochondrial release factor family. Post-translationally, methylated by PrmC. Methylation increases the termination efficiency of RF1.

The protein localises to the cytoplasm. Its function is as follows. Peptide chain release factor 1 directs the termination of translation in response to the peptide chain termination codons UAG and UAA. In Mycoplasma mycoides subsp. mycoides SC (strain CCUG 32753 / NCTC 10114 / PG1), this protein is Peptide chain release factor 1.